A 623-amino-acid chain; its full sequence is DNA mismatch repair protein MutL (623 aa).

Residues 353–368 (AQQSAPRPANSYSPAS) show a composition bias toward polar residues. A disordered region spans residues 353 to 389 (AQQSAPRPANSYSPASWRTAPPAPRSEWSPQTAHPAH).

It belongs to the DNA mismatch repair MutL/HexB family.

In terms of biological role, this protein is involved in the repair of mismatches in DNA. It is required for dam-dependent methyl-directed DNA mismatch repair. May act as a 'molecular matchmaker', a protein that promotes the formation of a stable complex between two or more DNA-binding proteins in an ATP-dependent manner without itself being part of a final effector complex. This chain is DNA mismatch repair protein MutL, found in Brucella melitensis biotype 1 (strain ATCC 23456 / CCUG 17765 / NCTC 10094 / 16M).